The sequence spans 898 residues: Dipeptidyl peptidase 8 (898 aa).

Residues Ser755, Asp833, and His865 each act as charge relay system in the active site.

The protein belongs to the peptidase S9B family. DPPIV subfamily. As to quaternary structure, homodimer. Forms a ternary complex with NLRP1, composed of a DPP8 homodimer, one full-length NLRP1 protein, and one cleaved C-terminus of NLRP1 (NACHT, LRR and PYD domains-containing protein 1, C-terminus). Forms a ternary complex with CARD8, composed of a DPP8 homodimer, one full-length NLRP1 protein, and one cleaved C-terminus of CARD8 (Caspase recruitment domain-containing protein 8, C-terminus). In the ternary complex, only one subunit of the DPP8 homodimer is bound to NLRP1 or CARD8. Ubiquitously expressed, with highest levels in testis, placenta, prostate, muscle and brain.

It localises to the cytoplasm. It catalyses the reaction Release of an N-terminal dipeptide, Xaa-Yaa-|-Zaa-, from a polypeptide, preferentially when Yaa is Pro, provided Zaa is neither Pro nor hydroxyproline.. Its activity is regulated as follows. Inhibited by zinc. Inhibited by the serine proteinase inhibitor 4-(2-aminoethyl)benzenesulphonyl fluoride (AEBSF), and by di-isopropylfluorophosphate. Specifically inhibited by isoindoline derivatives. Inhibited by Val-boroPro (Talabostat, PT-100), a non-selective inhibitor, which triggers pyroptosis in monocytes and macrophages. Dipeptidyl peptidase that cleaves off N-terminal dipeptides from proteins having a Pro or Ala residue at position 2. Acts as a key inhibitor of caspase-1-dependent monocyte and macrophage pyroptosis in resting cells by preventing activation of NLRP1 and CARD8. Sequesters the cleaved C-terminal part of NLRP1 and CARD8, which respectively constitute the active part of the NLRP1 and CARD8 inflammasomes, in a ternary complex, thereby preventing their oligomerization and activation. The dipeptidyl peptidase activity is required to suppress NLRP1 and CARD8; however, neither NLRP1 nor CARD8 are bona fide substrates of DPP8, suggesting the existence of substrate(s) required for NLRP1 and CARD8 inhibition. The chain is Dipeptidyl peptidase 8 from Homo sapiens (Human).